Here is a 1003-residue protein sequence, read N- to C-terminus: Retinoblastoma-related protein 1 (1003 aa).

The domain A stretch occupies residues 405-607; sequence TPVSTAMTTA…EKGSSMYNSL (203 aa). The tract at residues 405–860 is pocket; the sequence is TPVSTAMTTA…NEMFIPSVKP (456 aa). The tract at residues 608–729 is spacer; that stretch reads AVAKPSLAAE…PGGGGETCAE (122 aa). The tract at residues 730–860 is domain B; it reads TAINVFFGKI…NEMFIPSVKP (131 aa). Residues 868–899 form a disordered region; sequence AGNNSEKNDHNDGQGPASPKPSPFPKLPDMSP.

Belongs to the retinoblastoma protein (RB) family. As to expression, expressed in roots, stems, leaves and flowers.

The protein localises to the nucleus. Functionally, regulator of biological processes that recruits a histone deacetylase to control gene transcription. Formation of stable complexes with geminiviridae replication-associated proteins may create a cellular environment which favors viral DNA replication. May play a role in the entry into mitosis, negatively regulating the cell proliferation during leaf, stem, and flower development. Critical regulator of the endocycle. In Nicotiana benthamiana, this protein is Retinoblastoma-related protein 1 (RBR1).